The chain runs to 1238 residues: ATP-dependent helicase/nuclease subunit A (1238 aa).

The UvrD-like helicase ATP-binding domain occupies 12 to 490; sequence VSWTDDQWKA…IDLNANFRSR (479 aa). 33 to 40 contacts ATP; the sequence is AAAGSGKT. Positions 510–818 constitute a UvrD-like helicase C-terminal domain; the sequence is GEILYDDNAS…RLVTIHSSKG (309 aa).

The protein belongs to the helicase family. AddA subfamily. As to quaternary structure, heterodimer of AddA and AddB/RexB. It depends on Mg(2+) as a cofactor.

It catalyses the reaction Couples ATP hydrolysis with the unwinding of duplex DNA by translocating in the 3'-5' direction.. It carries out the reaction ATP + H2O = ADP + phosphate + H(+). In terms of biological role, the heterodimer acts as both an ATP-dependent DNA helicase and an ATP-dependent, dual-direction single-stranded exonuclease. Recognizes the chi site generating a DNA molecule suitable for the initiation of homologous recombination. The AddA nuclease domain is required for chi fragment generation; this subunit has the helicase and 3' -&gt; 5' nuclease activities. This chain is ATP-dependent helicase/nuclease subunit A, found in Lysinibacillus sphaericus (strain C3-41).